The primary structure comprises 437 residues: GTPase Obg (437 aa).

The Obg domain maps to Ser2 to Leu160. One can recognise an OBG-type G domain in the interval Ala161 to Ala338. GTP-binding positions include Gly167–Ser174, Phe192–Val196, Asp214–Gly217, Asn284–Asp287, and Ser319–Leu321. Mg(2+) is bound by residues Ser174 and Thr194. Residues Gly359–Asp437 enclose the OCT domain.

Belongs to the TRAFAC class OBG-HflX-like GTPase superfamily. OBG GTPase family. In terms of assembly, monomer. Mg(2+) is required as a cofactor.

The protein resides in the cytoplasm. Functionally, an essential GTPase which binds GTP, GDP and possibly (p)ppGpp with moderate affinity, with high nucleotide exchange rates and a fairly low GTP hydrolysis rate. Plays a role in control of the cell cycle, stress response, ribosome biogenesis and in those bacteria that undergo differentiation, in morphogenesis control. In Streptococcus pyogenes serotype M5 (strain Manfredo), this protein is GTPase Obg.